The sequence spans 189 residues: Peptidyl-tRNA hydrolase (189 aa).

Position 14 (Tyr-14) interacts with tRNA. The active-site Proton acceptor is His-19. The tRNA site is built by Tyr-64, Asn-66, and Asn-112.

The protein belongs to the PTH family. Monomer.

It localises to the cytoplasm. The enzyme catalyses an N-acyl-L-alpha-aminoacyl-tRNA + H2O = an N-acyl-L-amino acid + a tRNA + H(+). Its function is as follows. Hydrolyzes ribosome-free peptidyl-tRNAs (with 1 or more amino acids incorporated), which drop off the ribosome during protein synthesis, or as a result of ribosome stalling. In terms of biological role, catalyzes the release of premature peptidyl moieties from peptidyl-tRNA molecules trapped in stalled 50S ribosomal subunits, and thus maintains levels of free tRNAs and 50S ribosomes. In Finegoldia magna (strain ATCC 29328 / DSM 20472 / WAL 2508) (Peptostreptococcus magnus), this protein is Peptidyl-tRNA hydrolase.